A 445-amino-acid chain; its full sequence is Maltoporin (445 aa).

Residues 1–25 (MKMKAKWLPIAAGVTAALASQAAFA) form the signal peptide.

Belongs to the porin LamB (TC 1.B.3) family. Homotrimer formed of three 18-stranded antiparallel beta-barrels, containing three independent channels.

It is found in the cell outer membrane. It catalyses the reaction beta-maltose(in) = beta-maltose(out). Its function is as follows. Involved in the transport of maltose and maltodextrins. The polypeptide is Maltoporin (Aeromonas salmonicida).